Here is a 110-residue protein sequence, read N- to C-terminus: Parvalbumin alpha (110 aa).

At Ser2 the chain carries N-acetylserine. A phosphoserine mark is found at Ser2 and Ser24. 2 EF-hand domains span residues 39-74 and 78-110; these read KSPE…FSPD and LSVK…VAES. Residues Asp52, Asp54, Ser56, Phe58, Glu60, Glu63, Asp91, Asp93, Asp95, Lys97, and Glu102 each coordinate Ca(2+).

This sequence belongs to the parvalbumin family.

Its function is as follows. In muscle, parvalbumin is thought to be involved in relaxation after contraction. It binds two calcium ions. This chain is Parvalbumin alpha (PVALB), found in Bos taurus (Bovine).